The following is a 75-amino-acid chain: Mitotic-spindle organizing protein 1 (75 aa).

The protein belongs to the MOZART1 family. In terms of assembly, part of the gamma-tubulin complex.

It localises to the cytoplasm. The protein localises to the cytoskeleton. It is found in the microtubule organizing center. The protein resides in the centrosome. Its subcellular location is the spindle. Required for gamma-tubulin complex recruitment to the centrosome. The protein is Mitotic-spindle organizing protein 1 (mzt1) of Danio rerio (Zebrafish).